A 225-amino-acid polypeptide reads, in one-letter code: MSQSQFDPYVQNGGTTVAIAGDGFAILAGDTRSVNGYNINTRFQPRVHEVGDDLVIGASGFEADALALVKRIQQRIDLYHDNHERKMSAQSCACMVRTLLYGKRFFPYYVYTTVAGIDKEGKGEIYSFDPVGSYEREWCRAGGSAANFITPFLDNQVNLHNQYVPGSHGKERKPRRLLKLEEAMKITTDAFTSAGERHIEVGDSVLVKIITKEGVETRIIPLKKD.

It belongs to the peptidase T1B family. The 26S proteasome consists of a 20S proteasome core and two 19S regulatory subunits. The 20S proteasome core is composed of 28 subunits that are arranged in four stacked rings, resulting in a barrel-shaped structure. The two end rings are each formed by seven alpha subunits, and the two central rings are each formed by seven beta subunits. The catalytic chamber with the active sites is on the inside of the barrel.

Its subcellular location is the cytoplasm. The protein resides in the nucleus. Its function is as follows. Non-catalytic component of the proteasome, a multicatalytic proteinase complex which is characterized by its ability to cleave peptides with Arg, Phe, Tyr, Leu, and Glu adjacent to the leaving group at neutral or slightly basic pH. The proteasome has an ATP-dependent proteolytic activity. This is Probable proteasome subunit beta type-6 (pam1) from Schizosaccharomyces pombe (strain 972 / ATCC 24843) (Fission yeast).